Reading from the N-terminus, the 251-residue chain is Imidazole glycerol phosphate synthase subunit HisF (251 aa).

Residues D11 and D130 contribute to the active site.

The protein belongs to the HisA/HisF family. Heterodimer of HisH and HisF.

Its subcellular location is the cytoplasm. The catalysed reaction is 5-[(5-phospho-1-deoxy-D-ribulos-1-ylimino)methylamino]-1-(5-phospho-beta-D-ribosyl)imidazole-4-carboxamide + L-glutamine = D-erythro-1-(imidazol-4-yl)glycerol 3-phosphate + 5-amino-1-(5-phospho-beta-D-ribosyl)imidazole-4-carboxamide + L-glutamate + H(+). It functions in the pathway amino-acid biosynthesis; L-histidine biosynthesis; L-histidine from 5-phospho-alpha-D-ribose 1-diphosphate: step 5/9. Functionally, IGPS catalyzes the conversion of PRFAR and glutamine to IGP, AICAR and glutamate. The HisF subunit catalyzes the cyclization activity that produces IGP and AICAR from PRFAR using the ammonia provided by the HisH subunit. The protein is Imidazole glycerol phosphate synthase subunit HisF of Listeria monocytogenes serotype 4b (strain CLIP80459).